Reading from the N-terminus, the 269-residue chain is Putative hydro-lyase Swoo_1731 (269 aa).

Belongs to the D-glutamate cyclase family.

The chain is Putative hydro-lyase Swoo_1731 from Shewanella woodyi (strain ATCC 51908 / MS32).